A 254-amino-acid chain; its full sequence is Isoprenyl transferase (254 aa).

D34 is a catalytic residue. D34 provides a ligand contact to Mg(2+). Substrate is bound by residues 35–38 (GNGR), W39, R47, H51, and 79–81 (STE). Residue N82 is the Proton acceptor of the active site. Substrate is bound by residues W83, R85, R202, and 208–210 (RIS). E221 lines the Mg(2+) pocket.

Belongs to the UPP synthase family. In terms of assembly, homodimer. Mg(2+) is required as a cofactor.

In terms of biological role, catalyzes the condensation of isopentenyl diphosphate (IPP) with allylic pyrophosphates generating different type of terpenoids. This chain is Isoprenyl transferase, found in Staphylococcus saprophyticus subsp. saprophyticus (strain ATCC 15305 / DSM 20229 / NCIMB 8711 / NCTC 7292 / S-41).